Reading from the N-terminus, the 161-residue chain is Nucleotide-binding protein HCH_04620 (161 aa).

It belongs to the YajQ family.

Functionally, nucleotide-binding protein. The sequence is that of Nucleotide-binding protein HCH_04620 from Hahella chejuensis (strain KCTC 2396).